A 541-amino-acid polypeptide reads, in one-letter code: Zinc finger protein 655 (541 aa).

The disordered stretch occupies residues 1-22 (MEEVTSQEAAESPRGHFQPLEN). C2H2-type zinc fingers lie at residues 243–265 (YKCD…QRIH), 271–293 (YKCK…KRIH), 334–356 (YKCG…QRTH), 361–383 (CKCT…QRLH), 411–433 (YSCN…QRIH), and 439–461 (HECN…HKMH). The C2H2-type 7; degenerate zinc finger occupies 495–517 (FDCDAWEENFSQRAHLIQHERVH).

Belongs to the krueppel C2H2-type zinc-finger protein family. As to quaternary structure, interacts with VAV1 and CDK4. Interacts with INTS13; promoting association with the integrator complex.

Its subcellular location is the nucleus. Probable transcription factor. The chain is Zinc finger protein 655 (Znf655) from Mus musculus (Mouse).